We begin with the raw amino-acid sequence, 383 residues long: Succinyl-diaminopimelate desuccinylase (383 aa).

A Zn(2+)-binding site is contributed by His-73. Asp-75 is an active-site residue. Asp-107 contributes to the Zn(2+) binding site. Glu-141 serves as the catalytic Proton acceptor. Zn(2+) contacts are provided by Glu-142, Glu-170, and His-356.

Belongs to the peptidase M20A family. DapE subfamily. In terms of assembly, homodimer. Zn(2+) serves as cofactor. The cofactor is Co(2+).

It catalyses the reaction N-succinyl-(2S,6S)-2,6-diaminopimelate + H2O = (2S,6S)-2,6-diaminopimelate + succinate. It functions in the pathway amino-acid biosynthesis; L-lysine biosynthesis via DAP pathway; LL-2,6-diaminopimelate from (S)-tetrahydrodipicolinate (succinylase route): step 3/3. In terms of biological role, catalyzes the hydrolysis of N-succinyl-L,L-diaminopimelic acid (SDAP), forming succinate and LL-2,6-diaminopimelate (DAP), an intermediate involved in the bacterial biosynthesis of lysine and meso-diaminopimelic acid, an essential component of bacterial cell walls. In Pseudomonas putida (strain GB-1), this protein is Succinyl-diaminopimelate desuccinylase.